Reading from the N-terminus, the 159-residue chain is uncharacterized protein (159 aa).

An N-acetyltransferase domain is found at 7-151; that stretch reads LLINYKTLEE…NPLVWHPASE (145 aa).

This is an uncharacterized protein from Bacillus licheniformis (strain ATCC 14580 / DSM 13 / JCM 2505 / CCUG 7422 / NBRC 12200 / NCIMB 9375 / NCTC 10341 / NRRL NRS-1264 / Gibson 46).